The chain runs to 841 residues: Protein translocase subunit SecA (841 aa).

Residues Gln87, 105–109 (GEGKT), and Asp494 contribute to the ATP site. Zn(2+) is bound by residues Cys825, Cys827, Cys836, and Cys837.

It belongs to the SecA family. As to quaternary structure, monomer and homodimer. Part of the essential Sec protein translocation apparatus which comprises SecA, SecYEG and auxiliary proteins SecDF-YajC and YidC. It depends on Zn(2+) as a cofactor.

Its subcellular location is the cell inner membrane. It is found in the cytoplasm. It catalyses the reaction ATP + H2O + cellular proteinSide 1 = ADP + phosphate + cellular proteinSide 2.. In terms of biological role, part of the Sec protein translocase complex. Interacts with the SecYEG preprotein conducting channel. Has a central role in coupling the hydrolysis of ATP to the transfer of proteins into and across the cell membrane, serving as an ATP-driven molecular motor driving the stepwise translocation of polypeptide chains across the membrane. The sequence is that of Protein translocase subunit SecA from Syntrophus aciditrophicus (strain SB).